The sequence spans 1511 residues: Bifunctional glutamate/proline--tRNA ligase (1511 aa).

Residues 164–758 (GTKWDVSENK…SSVLYNRVAA (595 aa)) are glutamate--tRNA ligase. A 'HIGH' region motif is present at residues 204-214 (PEASGYLHIGH). The segment at 296 to 315 (AEQMKAEREQRAESKHRQNS) is disordered. Residues 299 to 315 (MKAEREQRAESKHRQNS) show a composition bias toward basic and acidic residues. An N6-acetyllysine; alternate modification is found at lysine 300. Lysine 300 carries the N6-malonyllysine; alternate modification. The residue at position 355 (threonine 355) is a Phosphothreonine. N6-acetyllysine is present on lysine 417. A 'KMSKS' region motif is present at residues 432–436 (VLSKR). Residue serine 434 is modified to Phosphoserine. Residues lysine 498, lysine 535, lysine 542, and lysine 637 each carry the N6-acetyllysine modification. Positions 708 to 728 (KEMPTSGSKEKTKAEPLKKET) are enriched in basic and acidic residues. The disordered stretch occupies residues 708–741 (KEMPTSGSKEKTKAEPLKKETSSAPKEGPVPAVS). Serine 746 is subject to Phosphoserine. The WHEP-TRS 1 domain occupies 748–804 (ESSVLYNRVAAQGDVVRELKAKKAAKEDVDAAVKQLLALKAEYKQKTGQEYKPGNPP). The interval 759-955 (QGDVVRELKA…GIEYKPVSAT (197 aa)) is 3 X 57 AA approximate repeats. An N6-acetyllysine modification is found at lysine 787. The tract at residues 794 to 823 (TGQEYKPGNPPSAAAQSASTKSLPSAGEDR) is disordered. Residues 807 to 816 (AAQSASTKSL) are compositionally biased toward polar residues. Residues 821-877 (EDRSLYDKIAAQGEVVRKLKAEKAPKAKVTEAVECLLSLKAEYKEKTGKEYVPGQPP) enclose the WHEP-TRS 2 domain. Lysine 860 carries the N6-acetyllysine modification. Disordered regions lie at residues 868–903 (GKEY…AKAL) and 952–1015 (VSAT…RLGL). Tyrosine 871 carries the post-translational modification Phosphotyrosine. Positions 877 to 890 (PASQKSQPSPASKA) are enriched in low complexity. Serine 885 carries the phosphoserine; by CDK5 modification. Threonine 897 bears the Phosphothreonine mark. Residues 899-955 (EAKALFDRVACQGEVVRKLKAEKASKDQVDPAVQELLQLKAQYKSLTGIEYKPVSAT) form the WHEP-TRS 3 domain. Positions 957-975 (SEDKDKKKKEKENKSEKQN) are enriched in basic and acidic residues. Positions 992–1005 (QGGGLSSSGAGEGQ) are enriched in gly residues. The residue at position 997 (serine 997) is a Phosphoserine. Position 998 is a phosphoserine; by RPS6KB1 (serine 998). A Phosphoserine modification is found at serine 999. The tract at residues 1006 to 1511 (GPKKQTRLGL…KFYTLFGRSY (506 aa)) is proline--tRNA ligase. Residues 1120–1122 (TSE) and arginine 1151 each bind L-proline. ATP is bound by residues arginine 1151, glutamate 1153, arginine 1162, threonine 1163, glutamine 1236, and threonine 1239. Omega-N-methylarginine is present on arginine 1151. Residue glutamine 1236 coordinates Mg(2+). An L-proline-binding site is contributed by histidine 1241. Positions 1275 and 1277 each coordinate ATP. Serine 1349 carries the post-translational modification Phosphoserine. Zn(2+) contacts are provided by cysteine 1447, cysteine 1452, cysteine 1494, and cysteine 1496. Lysine 1502 carries the post-translational modification N6-acetyllysine.

In the N-terminal section; belongs to the class-I aminoacyl-tRNA synthetase family. Glutamate--tRNA ligase type 2 subfamily. It in the C-terminal section; belongs to the class-II aminoacyl-tRNA synthetase family. Homodimer. Part of the aminoacyl-tRNA synthetase multienzyme complex, also know as multisynthetase complex, that is composed of the tRNA ligases for Arg (RARS1), Asp (DARS1), Gln (QARS1), Ile (IARS1), Leu (LARS1), Lys (KARS1), Met (MARS1) the bifunctional ligase for Glu and Pro (EPRS1) and the auxiliary subunits AIMP1/p43, AIMP2/p38 and EEF1E1/p18. Forms a linear complex that contains MARS1, EEF1E1, EPRS1 and AIMP2 that is at the core of the multisubunit complex. Interacts with TARS3. Interacts with DUS2L. Component of the GAIT complex which is composed of EPRS1, RPL13A and GAPDH. Interacts (phosphorylated at Ser-998) with SLC27A1; mediates the translocation of SLC27A1 from the cytoplasm to the plasma membrane thereby increasing the uptake of long-chain fatty acids. In terms of processing, phosphorylated at Ser-998 by RPS6KB1; triggers EPRS1 release from the aminoacyl-tRNA synthetase multienzyme complex. In monocytes, the IFN-gamma-induced phosphorylation at Ser-998 releases EPRS1 from the aminoacyl-tRNA synthetase multienzyme complex, allowing its association with the GAIT complex. Phosphorylation at Ser-998 is specifically required for the RPL13A-mediated interaction of the GAIT complex with eIF4G. Phosphorylation at Ser-998 by RPS6KB1, is also induced by insulin through activation of the mTORC1 signaling pathway and promotes the interaction of EPRS1 with SLC27A1.

It localises to the cytoplasm. The protein resides in the cytosol. Its subcellular location is the membrane. The enzyme catalyses tRNA(Glu) + L-glutamate + ATP = L-glutamyl-tRNA(Glu) + AMP + diphosphate. The catalysed reaction is tRNA(Pro) + L-proline + ATP = L-prolyl-tRNA(Pro) + AMP + diphosphate. In terms of biological role, multifunctional protein which primarily functions within the aminoacyl-tRNA synthetase multienzyme complex, also known as multisynthetase complex. Within the complex it catalyzes the attachment of both L-glutamate and L-proline to their cognate tRNAs in a two-step reaction where the amino acid is first activated by ATP to form a covalent intermediate with AMP. Subsequently, the activated amino acid is transferred to the acceptor end of the cognate tRNA to form L-glutamyl-tRNA(Glu) and L-prolyl-tRNA(Pro). Upon interferon-gamma stimulation, EPRS1 undergoes phosphorylation, causing its dissociation from the aminoacyl-tRNA synthetase multienzyme complex. It is recruited to form the GAIT complex, which binds to stem loop-containing GAIT elements found in the 3'-UTR of various inflammatory mRNAs, such as ceruloplasmin. The GAIT complex inhibits the translation of these mRNAs, allowing interferon-gamma to redirect the function of EPRS1 from protein synthesis to translation inhibition in specific cell contexts. Furthermore, it can function as a downstream effector in the mTORC1 signaling pathway, by promoting the translocation of SLC27A1 from the cytoplasm to the plasma membrane where it mediates the uptake of long-chain fatty acid by adipocytes. Thereby, EPRS1 also plays a role in fat metabolism and more indirectly influences lifespan. The polypeptide is Bifunctional glutamate/proline--tRNA ligase (Cricetulus griseus (Chinese hamster)).